The primary structure comprises 263 residues: Endonuclease 8 (263 aa).

P2 functions as the Schiff-base intermediate with DNA in the catalytic mechanism. E3 (proton donor) is an active-site residue. The active-site Proton donor; for beta-elimination activity is K53. Positions 70, 125, and 169 each coordinate DNA. The FPG-type zinc finger occupies 229-263 (KVFHRDGEACERCGGIIEKTTLSSRPFYWCPHCQK). Residue R253 is the Proton donor; for delta-elimination activity of the active site.

This sequence belongs to the FPG family. Requires Zn(2+) as cofactor.

The enzyme catalyses 2'-deoxyribonucleotide-(2'-deoxyribose 5'-phosphate)-2'-deoxyribonucleotide-DNA = a 3'-end 2'-deoxyribonucleotide-(2,3-dehydro-2,3-deoxyribose 5'-phosphate)-DNA + a 5'-end 5'-phospho-2'-deoxyribonucleoside-DNA + H(+). Functionally, involved in base excision repair of DNA damaged by oxidation or by mutagenic agents. Acts as a DNA glycosylase that recognizes and removes damaged bases. Has a preference for oxidized pyrimidines, such as thymine glycol, 5,6-dihydrouracil and 5,6-dihydrothymine. Has AP (apurinic/apyrimidinic) lyase activity and introduces nicks in the DNA strand. Cleaves the DNA backbone by beta-delta elimination to generate a single-strand break at the site of the removed base with both 3'- and 5'-phosphates. The polypeptide is Endonuclease 8 (Salmonella heidelberg (strain SL476)).